Here is a 309-residue protein sequence, read N- to C-terminus: MRKIIVGTRKSNLALTQTEWVIDQLKKAGVKNEFEIKKIVTKGDQILDVTLSKVGGKGLFVKEIEKAMFDKEIDLAVHSMKDMPAVIPEGLTISSIPEREDHRDAYLAKDNILLQDLPEGAIVGTSSLRRGAQILAERPDLTIKWIRGNIETRIRKLQEEDYDAIILAVSGLKRVGLSEELITEYLEPEVCVPAVGQGALAIESREDDEELTNIVKKIHDAYTAKTVSAERTFLHLLEGGCQVPIGGYAYLDGDEVVLTALVGDPDGTTILKETVRGTEPTEVGKEAAELLISQGAKEIVDRVKEEMDQ.

Cysteine 241 carries the S-(dipyrrolylmethanemethyl)cysteine modification.

The protein belongs to the HMBS family. In terms of assembly, monomer. The cofactor is dipyrromethane.

It carries out the reaction 4 porphobilinogen + H2O = hydroxymethylbilane + 4 NH4(+). Its pathway is porphyrin-containing compound metabolism; protoporphyrin-IX biosynthesis; coproporphyrinogen-III from 5-aminolevulinate: step 2/4. Its function is as follows. Tetrapolymerization of the monopyrrole PBG into the hydroxymethylbilane pre-uroporphyrinogen in several discrete steps. The protein is Porphobilinogen deaminase of Oceanobacillus iheyensis (strain DSM 14371 / CIP 107618 / JCM 11309 / KCTC 3954 / HTE831).